Reading from the N-terminus, the 336-residue chain is MIINHNTSAINASRNNGINAANLSKTQEKLSSGYRINRASDDAAGMGVSGKINAQIRGLSQASRNTSKAINFIQTTEGNLNEVEKVLVRMKELAVQSGNGTYSDADRGSIQIEIEQLTDEINRIADQAQYNQMHMLSNKSASQNVRTAEELGMQPAKINTPASLSGSQASWTLRVHVGANQDEAIAVNIYAANVANLFSGEGAQTAQAAPVQEGVQQEGAQQPAPATAPSQGGVNSPVNVTTTVDANTSLAKIENAIRMISDQRANLGAFQNRLESIKDSTEYAIENLKASYAQIKDATMTDEVVAATTNSILTQSAMAMIAQANQVPQYVLSLLR.

Residues 208–236 (AAPVQEGVQQEGAQQPAPATAPSQGGVNS) are disordered. Residues 210–233 (PVQEGVQQEGAQQPAPATAPSQGG) are compositionally biased toward low complexity.

This sequence belongs to the bacterial flagellin family. As to quaternary structure, the flagellum consists of an outer layer composed of repeating units of FlaA around a core that contains several antigenically related polypeptides.

It localises to the periplasmic flagellum. Its subcellular location is the periplasm. In terms of biological role, component of the core of the flagella. The polypeptide is Flagellar filament 41 kDa core protein (fla) (Borreliella burgdorferi (strain ATCC 35210 / DSM 4680 / CIP 102532 / B31) (Borrelia burgdorferi)).